We begin with the raw amino-acid sequence, 37 residues long: Mu-cyrtautoxin-As1a (37 aa).

4 disulfides stabilise this stretch: cysteine 1–cysteine 15, cysteine 8–cysteine 19, cysteine 14–cysteine 35, and cysteine 26–cysteine 31.

This sequence belongs to the neurotoxin 13 (insecticidal toxin ABC) family. 01 (Aps III) subfamily. As to expression, expressed by the venom gland.

The protein localises to the secreted. In terms of biological role, the recombinant mu-cyrtautoxin-As1a potently and voltage-independently blocks voltage-gated sodium channels (Nav) of insects. It acts by pluging the outer vestibule of the channel. It acts in combination with a weak (30%) voltage-independent block of insect voltage-gated calcium (Cav) channels (low-voltage and high-voltage channels). Tested on DUM neurons, it inhibits sodium currents with an IC(50) of 540 nM (and a Hill coefficient &gt;1, reflecting an incomplete block at higher concentrations). In vivo, it induces flaccid paralysis in adult Australian sheep blowfly Lucilia cuprina. It is both paralytic and lethal, when injected into lepidopteran larvae. It is a slower acting toxin, being lethal at 24 hours, but not paralytic at 1 hour post-injection. In Apomastus schlingeri (Trap-door spider), this protein is Mu-cyrtautoxin-As1a.